Here is a 446-residue protein sequence, read N- to C-terminus: MTHKVKIHRLSDLSAEQRNKLLQRTESNLDNFIDIVKPIIENVKLNGDKALSEYAKKFDKAEVSTDQIQVTQAEFDEAFTLVDEEVIQTLSYSIDNIKKFHEAQMPEEMWMKQIRPGCYAGDRFTPINAVACYIPRGKGSFPSVAIMTAVPAIVAGVPTAIIITPPGTDGKVDAATLVVAKLVGIDKVFKCGGAQGIAAVAYGTNTVPKCDKVVGPGSPFVVAAKKLLADIIHPGTPAGPSEAIVLADDTANPKLAALDLLVEAEHGPDSSAFLVTNSKELAEQAQVAINEYWQHMDRLRVDFSSTVLSGDNGGIVLTSTFEEAVDFCNDYAAEHLLILSKSPFDHLGKIINAGEILLGENTPISIANYTLGPNAVLPTSMAAKTASPLSVFDYLKSCSIGYLTREGYEELAPHTYRFAKYEGFDAHANAVSHLRDEAIKSEKKIK.

His266 is a Zn(2+) binding site. Active-site proton acceptor residues include Glu334 and His335. Residue His427 participates in Zn(2+) binding.

It belongs to the histidinol dehydrogenase family. Requires Zn(2+) as cofactor.

The polypeptide is Histidinol dehydrogenase homolog (Colwellia psychrerythraea (strain 34H / ATCC BAA-681) (Vibrio psychroerythus)).